The sequence spans 376 residues: RCC1 domain-containing protein 1 (376 aa).

The interval 1–169 (MAEERPGAWF…ARQLELGAEH (169 aa)) is interaction with KDM8. The stretch at 6-56 (PGAWFGFGFCGFGQELGSGRGRQVHSPSPLRAGVDICRVSASWSYTAFVTR) is one RCC1 1 repeat. Arg141 carries the (3R)-3-hydroxyarginine modification. RCC1 repeat units lie at residues 176-227 (AGQV…CVSE), 229-317 (GDIY…VVTR), and 318-371 (TGEL…VYAV).

As to quaternary structure, found in a complex with KDM8. Interacts (via N-terminus) with KDM8 (via N-terminus). Post-translationally, specifically hydroxylated (with R stereochemistry) at C-3 of ARG-141 by KDM8.

Its subcellular location is the chromosome. Plays a role in transcriptional repression of satellite repeats, possibly by regulating H3K36 methylation levels in centromeric regions together with KDM8. Possibly together with KDM8, is involved in proper mitotic spindle organization and chromosome segregation. Plays a role in regulating alpha-tubulin deacetylation and cytoskeletal microtubule stability, thereby promoting cell migration and TGF-beta-induced epithelial to mesenchymal transition (EMT), potentially through the inhibition of KDM8. In Homo sapiens (Human), this protein is RCC1 domain-containing protein 1.